A 580-amino-acid polypeptide reads, in one-letter code: F-box only protein 24 (580 aa).

One can recognise an F-box domain in the interval 36–82 (PISIQLFPPELVEHIISFLPVRDLVALGQTCRYFHEVCDAEGVWRRI). The RCC1 repeat unit spans residues 376–425 (GRIFMQGNNRYGQLGTGDKMDRGEPTQVRYLQRPITLWCGLNHSLVLSQS).

Directly interacts with SKP1 and CUL1.

Functionally, substrate-recognition component of the SCF (SKP1-CUL1-F-box protein)-type E3 ubiquitin ligase complex. This is F-box only protein 24 (FBXO24) from Macaca fascicularis (Crab-eating macaque).